We begin with the raw amino-acid sequence, 104 residues long: Nucleoid-associated protein EF_2780 (104 aa).

It belongs to the YbaB/EbfC family. As to quaternary structure, homodimer.

It is found in the cytoplasm. It localises to the nucleoid. Functionally, binds to DNA and alters its conformation. May be involved in regulation of gene expression, nucleoid organization and DNA protection. This is Nucleoid-associated protein EF_2780 from Enterococcus faecalis (strain ATCC 700802 / V583).